The primary structure comprises 313 residues: Inner membrane ABC transporter permease protein YdcU (313 aa).

At 1–25 the chain is on the cytoplasmic side; the sequence is MAMNVLQSPSRPGLGKVSGFFWHNP. The chain crosses the membrane as a helical span at residues 26 to 46; that stretch reads GLGLFLLLLGPLMWFGIVYFG. The Periplasmic portion of the chain corresponds to 47–92; sequence SLLTLLWQGFYTFDDFTMSVTPELTLANIRALFNPANYDIILRTLT. Positions 87 to 302 constitute an ABC transmembrane type-1 domain; that stretch reads ILRTLTMAVA…PIILIALYLA (216 aa). The chain crosses the membrane as a helical span at residues 93–113; that stretch reads MAVAVTIASAILAFPMAWYMA. Topologically, residues 114–122 are cytoplasmic; sequence RYTSGKMKA. A helical transmembrane segment spans residues 123-143; that stretch reads FFYIAVMLPMWASYIVKAYAW. Residues 144–154 lie on the Periplasmic side of the membrane; that stretch reads TLLLAKDGVAQ. Residues 155-175 traverse the membrane as a helical segment; it reads WFLQHLGLEPLLTAFLTLPAV. The Cytoplasmic segment spans residues 176 to 187; it reads GGNTLSTSGLGR. The chain crosses the membrane as a helical span at residues 188–208; the sequence is FLVFLYIWLPFMILPVQAALE. Topologically, residues 209–230 are periplasmic; that stretch reads RLPPSLLQASADLGARPRQTFR. Residues 231-251 form a helical membrane-spanning segment; that stretch reads YVVLPLAIPGIAAGSIFTFSL. Threonine 252 is a topological domain (cytoplasmic). A helical transmembrane segment spans residues 253-273; the sequence is LGDFIVPQLVGPPGYFIGNMV. Topologically, residues 274–283 are periplasmic; the sequence is YSQQGAIGNM. A helical transmembrane segment spans residues 284–304; it reads PMAAAFTLVPIILIALYLAFV. Residues 305 to 313 lie on the Cytoplasmic side of the membrane; it reads KRLGAFDAL.

This sequence belongs to the binding-protein-dependent transport system permease family. CysTW subfamily.

It is found in the cell inner membrane. Probably part of the ABC transporter complex YdcSTUV. Probably responsible for the translocation of the substrate across the membrane. In Escherichia coli (strain K12), this protein is Inner membrane ABC transporter permease protein YdcU (ydcU).